The sequence spans 263 residues: tRNA (guanine-N(7)-)-methyltransferase (263 aa).

Residues 1–33 (MSDHGRMHSTGSEVAAPVAPDPDTEGVHPHFNR) form a disordered region. The S-adenosyl-L-methionine site is built by E89, E114, D146, and D169. D169 is an active-site residue. Residues K173, D205, and 242-245 (TKYE) contribute to the substrate site.

This sequence belongs to the class I-like SAM-binding methyltransferase superfamily. TrmB family.

The enzyme catalyses guanosine(46) in tRNA + S-adenosyl-L-methionine = N(7)-methylguanosine(46) in tRNA + S-adenosyl-L-homocysteine. It functions in the pathway tRNA modification; N(7)-methylguanine-tRNA biosynthesis. Catalyzes the formation of N(7)-methylguanine at position 46 (m7G46) in tRNA. This Mycolicibacterium gilvum (strain PYR-GCK) (Mycobacterium gilvum (strain PYR-GCK)) protein is tRNA (guanine-N(7)-)-methyltransferase.